Here is a 409-residue protein sequence, read N- to C-terminus: Arginine deiminase (409 aa).

Cysteine 399 (amidino-cysteine intermediate) is an active-site residue.

It belongs to the arginine deiminase family.

The protein resides in the cytoplasm. The enzyme catalyses L-arginine + H2O = L-citrulline + NH4(+). It functions in the pathway amino-acid degradation; L-arginine degradation via ADI pathway; carbamoyl phosphate from L-arginine: step 1/2. The protein is Arginine deiminase of Borrelia garinii subsp. bavariensis (strain ATCC BAA-2496 / DSM 23469 / PBi) (Borreliella bavariensis).